The primary structure comprises 419 residues: Serine hydroxymethyltransferase (419 aa).

(6S)-5,6,7,8-tetrahydrofolate is bound by residues leucine 119 and 123–125 (GHL). At lysine 228 the chain carries N6-(pyridoxal phosphate)lysine.

Belongs to the SHMT family. In terms of assembly, homodimer. Requires pyridoxal 5'-phosphate as cofactor.

The protein resides in the cytoplasm. It carries out the reaction (6R)-5,10-methylene-5,6,7,8-tetrahydrofolate + glycine + H2O = (6S)-5,6,7,8-tetrahydrofolate + L-serine. It participates in one-carbon metabolism; tetrahydrofolate interconversion. It functions in the pathway amino-acid biosynthesis; glycine biosynthesis; glycine from L-serine: step 1/1. Functionally, catalyzes the reversible interconversion of serine and glycine with tetrahydrofolate (THF) serving as the one-carbon carrier. This reaction serves as the major source of one-carbon groups required for the biosynthesis of purines, thymidylate, methionine, and other important biomolecules. Also exhibits THF-independent aldolase activity toward beta-hydroxyamino acids, producing glycine and aldehydes, via a retro-aldol mechanism. The polypeptide is Serine hydroxymethyltransferase (Desulfosudis oleivorans (strain DSM 6200 / JCM 39069 / Hxd3) (Desulfococcus oleovorans)).